We begin with the raw amino-acid sequence, 176 residues long: MGALAARRCVEWLLGLYFVSHIPITLFIDLQAVLPPELYPQEFSNLLRWYSKEFKDPLMQEPPVWFKSFLLCELVFQLPFFPIAAYAFFKGSCRWIRIPAIIYAAHTITTLIPILYTLLFEDFSKAVAFKGQRPESFRERLTLVGVYAPYLIIPLILLLFMLRNPYYKYEEKRKKK.

Residues 1 to 9 lie on the Cytoplasmic side of the membrane; that stretch reads MGALAARRC. A helical membrane pass occupies residues 10–30; that stretch reads VEWLLGLYFVSHIPITLFIDL. Residues 10-158 form the EXPERA domain; sequence VEWLLGLYFV…PYLIIPLILL (149 aa). At 31–68 the chain is on the lumenal side; sequence QAVLPPELYPQEFSNLLRWYSKEFKDPLMQEPPVWFKS. A helical transmembrane segment spans residues 69–89; the sequence is FLLCELVFQLPFFPIAAYAFF. Residues V75 and Q77 each contribute to the cholesterol site. At 90-99 the chain is on the cytoplasmic side; the sequence is KGSCRWIRIP. A helical membrane pass occupies residues 100–120; sequence AIIYAAHTITTLIPILYTLLF. Topologically, residues 121 to 140 are lumenal; it reads EDFSKAVAFKGQRPESFRER. A helical transmembrane segment spans residues 141–161; it reads LTLVGVYAPYLIIPLILLLFM. The Cytoplasmic segment spans residues 162–176; it reads LRNPYYKYEEKRKKK. The short motif at 172 to 176 is the ER retention motif element; sequence KRKKK.

It belongs to the TMEM97/sigma-2 receptor family. In terms of assembly, homodimer. Interacts with NPC1; the interaction impairs NPC1-mediated cholesterol transport. Interacts with PGRMC1 and LDLR; the interaction increases LDL internalization. Interacts with histatin 1/HTN1; the interaction induces HTN1-stimulating wound healing. Interacts with TSPO.

It localises to the rough endoplasmic reticulum membrane. The protein localises to the nucleus membrane. In terms of biological role, sigma-2 receptor which contributes to ameliorate dysfunctional cellular processes and slow degenerative progression by regulating cell functions including cholesterol biosynthesis/trafficking, membrane trafficking, autophagy, lipid membrane-bound protein trafficking, and receptor stabilization at the cell surface. Forms a ternary complex with PGRMC1 receptor and low density lipoprotein receptor/LDLR at the plasma membrane, which increases LDLR-mediated LDL cholesterol internalization. Decreases lysosomal sterol transporter NPC1 availability to the cell, probably through NPC1-binding, hence controlling lipid transport, including cholesterol and LBPA, outside of late endosome/lysosome. Binds regio- and stereoselective ligand 20(S)-hydroxycholesterol (20(S)-OHC) which enhances TMEM97-NPC1 interaction and decreases TMEM97-PGRMC1 and TMEM97-TSPO interactions, thereby linking OHC binding to cholesterol homeostasis. Also able to bind cholesterol. Binds histatin 1 (Hst 1)/HN1 salivary peptide at the ER membrane, which is critical for increasing mitochondria-ER contacts and stimulating Hst1 wound healing properties. May alter the activity of some cytochrome P450 proteins. Although shows homologies with sterol isomerases (EXPERA domain), not able to catalyze sterol isomerization. However, may act as sensors of these molecules. Acts as a quality control factor in the ER, promoting the proteolytic degradation of nonproductive and extramitochondrial precursor proteins in the ER membrane thus removing them from the ER surface. This Mus musculus (Mouse) protein is Sigma intracellular receptor 2.